Consider the following 340-residue polypeptide: Methionine import ATP-binding protein MetN (340 aa).

The 240-residue stretch at Ile2–Ile241 folds into the ABC transporter domain. Position 38–45 (Gly38–Ser45) interacts with ATP.

Belongs to the ABC transporter superfamily. Methionine importer (TC 3.A.1.24) family. In terms of assembly, the complex is composed of two ATP-binding proteins (MetN), two transmembrane proteins (MetI) and a solute-binding protein (MetQ).

It is found in the cell membrane. It carries out the reaction L-methionine(out) + ATP + H2O = L-methionine(in) + ADP + phosphate + H(+). It catalyses the reaction D-methionine(out) + ATP + H2O = D-methionine(in) + ADP + phosphate + H(+). In terms of biological role, part of the ABC transporter complex MetNIQ involved in methionine import. Responsible for energy coupling to the transport system. The sequence is that of Methionine import ATP-binding protein MetN from Desulfitobacterium hafniense (strain Y51).